We begin with the raw amino-acid sequence, 141 residues long: MFKSIKQIKSSIGFITTNTTRRNFCSNKIGGFTIKNVEDESKIKINNEISEIEKLRKKLLYQSKERGMLENDLLLGSFATLNIHKLTESQLRDYNLLLQQPDPDIFNWILKKAEVPEEFETEVLKLVQHHCKNDPLGYTRK.

It belongs to the SDHAF2 family. In terms of assembly, interacts with the flavoprotein subunit within the SDH catalytic dimer.

Its subcellular location is the mitochondrion matrix. Plays an essential role in the assembly of succinate dehydrogenase (SDH), an enzyme complex (also referred to as respiratory complex II) that is a component of both the tricarboxylic acid (TCA) cycle and the mitochondrial electron transport chain, and which couples the oxidation of succinate to fumarate with the reduction of ubiquinone (coenzyme Q) to ubiquinol. Required for flavinylation (covalent attachment of FAD) of the flavoprotein subunit of the SDH catalytic dimer. This is Succinate dehydrogenase assembly factor 2, mitochondrial from Dictyostelium discoideum (Social amoeba).